A 315-amino-acid polypeptide reads, in one-letter code: Thioredoxin reductase (315 aa).

FAD is bound at residue 45-52 (EGNTPGGK). An intrachain disulfide couples Cys-145 to Cys-148. Residue 288-297 (DCRSKSFRQI) coordinates FAD.

It belongs to the class-II pyridine nucleotide-disulfide oxidoreductase family. As to quaternary structure, homodimer. FAD is required as a cofactor.

It localises to the cytoplasm. The enzyme catalyses [thioredoxin]-dithiol + NADP(+) = [thioredoxin]-disulfide + NADPH + H(+). This Mycoplasma genitalium (strain ATCC 33530 / DSM 19775 / NCTC 10195 / G37) (Mycoplasmoides genitalium) protein is Thioredoxin reductase (trxB).